We begin with the raw amino-acid sequence, 434 residues long: Glutamate-1-semialdehyde 2,1-aminomutase 2 (434 aa).

Residue Lys-269 is modified to N6-(pyridoxal phosphate)lysine.

This sequence belongs to the class-III pyridoxal-phosphate-dependent aminotransferase family. HemL subfamily. In terms of assembly, homodimer. Pyridoxal 5'-phosphate serves as cofactor.

It is found in the cytoplasm. The catalysed reaction is (S)-4-amino-5-oxopentanoate = 5-aminolevulinate. It participates in porphyrin-containing compound metabolism; protoporphyrin-IX biosynthesis; 5-aminolevulinate from L-glutamyl-tRNA(Glu): step 2/2. The protein is Glutamate-1-semialdehyde 2,1-aminomutase 2 of Exiguobacterium sp. (strain ATCC BAA-1283 / AT1b).